A 924-amino-acid polypeptide reads, in one-letter code: Inositol polyphosphate 4-phosphatase type II (924 aa).

A compositionally biased stretch (basic and acidic residues) spans 1–13 (MEIKEEGASEEGQ). Disordered stretches follow at residues 1-24 (MEIK…ANDP), 481-516 (ILKK…HSDY), and 546-570 (DGGS…AIPS). Positions 23–165 (DPGDCQFTSI…LKSKEQLLVL (143 aa)) constitute a C2 domain.

Belongs to the inositol 3,4-bisphosphate 4-phosphatase family. As to expression, widely expressed with highest levels occurring in the skeletal muscle and heart.

The catalysed reaction is a 1,2-diacyl-sn-glycero-3-phospho-(1D-myo-inositol-3,4-bisphosphate) + H2O = a 1,2-diacyl-sn-glycero-3-phospho-(1D-myo-inositol-3-phosphate) + phosphate. It catalyses the reaction 1D-myo-inositol 1,3,4-trisphosphate + H2O = 1D-myo-inositol 1,3-bisphosphate + phosphate. The enzyme catalyses 1D-myo-inositol 3,4-bisphosphate + H2O = 1D-myo-inositol 3-phosphate + phosphate. It functions in the pathway signal transduction; phosphatidylinositol signaling pathway. With respect to regulation, strongly inhibited by inositol hexakisphosphate. Catalyzes the hydrolysis of the 4-position phosphate of phosphatidylinositol 3,4-bisphosphate, inositol 1,3,4-trisphosphate and inositol 3,4-trisphosphate. Plays a role in the late stages of macropinocytosis by dephosphorylating phosphatidylinositol 3,4-bisphosphate in membrane ruffles. The lipid phosphatase activity is critical for tumor suppressor function. Antagonizes the PI3K-AKT/PKB signaling pathway by dephosphorylating phosphoinositides and thereby modulating cell cycle progression and cell survival. The chain is Inositol polyphosphate 4-phosphatase type II (INPP4B) from Homo sapiens (Human).